A 200-amino-acid chain; its full sequence is ATP-dependent Clp protease proteolytic subunit (200 aa).

The active-site Nucleophile is the Ser99. His124 is a catalytic residue.

The protein belongs to the peptidase S14 family. Fourteen ClpP subunits assemble into 2 heptameric rings which stack back to back to give a disk-like structure with a central cavity, resembling the structure of eukaryotic proteasomes.

The protein localises to the cytoplasm. The enzyme catalyses Hydrolysis of proteins to small peptides in the presence of ATP and magnesium. alpha-casein is the usual test substrate. In the absence of ATP, only oligopeptides shorter than five residues are hydrolyzed (such as succinyl-Leu-Tyr-|-NHMec, and Leu-Tyr-Leu-|-Tyr-Trp, in which cleavage of the -Tyr-|-Leu- and -Tyr-|-Trp bonds also occurs).. Its function is as follows. Cleaves peptides in various proteins in a process that requires ATP hydrolysis. Has a chymotrypsin-like activity. Plays a major role in the degradation of misfolded proteins. The protein is ATP-dependent Clp protease proteolytic subunit of Syntrophomonas wolfei subsp. wolfei (strain DSM 2245B / Goettingen).